A 1134-amino-acid polypeptide reads, in one-letter code: Protocadherin 18 (1134 aa).

A signal peptide spans methionine 1–alanine 27. 6 consecutive Cadherin domains span residues lysine 28–phenylalanine 137, serine 138–phenylalanine 246, glutamate 247–isoleucine 354, proline 361–phenylalanine 465, glutamine 466–valine 576, and histidine 582–methionine 688. Over lysine 28–serine 699 the chain is Extracellular. The N-linked (GlcNAc...) asparagine glycan is linked to asparagine 103. N-linked (GlcNAc...) asparagine glycosylation occurs at asparagine 269. Residue asparagine 559 is glycosylated (N-linked (GlcNAc...) asparagine). A helical membrane pass occupies residues methionine 700–phenylalanine 720. Over alanine 721–serine 1134 the chain is Cytoplasmic. Disordered regions lie at residues leucine 769–glutamine 800, serine 868–arginine 888, aspartate 941–leucine 1004, and phenylalanine 1022–lysine 1083. A compositionally biased stretch (polar residues) spans glycine 791–glutamine 800. A compositionally biased stretch (basic and acidic residues) spans serine 868–serine 877. Positions isoleucine 892–serine 1134 are interaction with DAB1. The segment covering glutamate 1027–lysine 1038 has biased composition (basic and acidic residues). Residues threonine 1059–serine 1082 show a composition bias toward polar residues.

As to quaternary structure, interacts with DAB1. As to expression, predominantly expressed in kidney and lung.

It localises to the cell membrane. Its function is as follows. Potential calcium-dependent cell-adhesion protein. In Mus musculus (Mouse), this protein is Protocadherin 18 (Pcdh18).